A 1067-amino-acid chain; its full sequence is Chitinase-like protein C25A8.4 (1067 aa).

The first 18 residues, 1–18 (MGIKTLIWLSILVVGIYC), serve as a signal peptide directing secretion. 3 consecutive GH18 domains span residues 26–364 (PVHY…IRNT), 372–727 (CTRL…QVCQ), and 743–1067 (FVVS…HKCR). Cysteines 30 and 51 form a disulfide. N-linked (GlcNAc...) asparagine glycans are attached at residues asparagine 47 and asparagine 216. A disulfide bridge links cysteine 376 with cysteine 397. 3 N-linked (GlcNAc...) asparagine glycosylation sites follow: asparagine 475, asparagine 538, and asparagine 710. Cysteine 747 and cysteine 768 are oxidised to a cystine. Residues asparagine 797 and asparagine 830 are each glycosylated (N-linked (GlcNAc...) asparagine). Glutamate 855 (proton donor) is an active-site residue. N-linked (GlcNAc...) asparagine glycosylation is found at asparagine 887, asparagine 933, and asparagine 1010.

Belongs to the glycosyl hydrolase 18 family.

It localises to the secreted. Functionally, putative chitinase. The polypeptide is Chitinase-like protein C25A8.4 (cht-3) (Caenorhabditis elegans).